The primary structure comprises 169 residues: Chorion protein E1 (169 aa).

An N-terminal signal peptide occupies residues 1–19 (MAWFTTVLIVASLLGSLVA). 2 Tetradecapeptide repeats span residues 114 to 127 (GAGRGAEMEGKPRS) and 128 to 141 (GAGKGAEMEGKPKS). The segment at 119–169 (AEMEGKPRSGAGKGAEMEGKPKSTESVAETNTVAAGTGVVAEKTGTESSAS) is disordered. Over residues 142–152 (TESVAETNTVA) the composition is skewed to polar residues.

Functionally, this protein is one of two components of the prominent 'filler' that helps mold the shape of aeropyle crowns. This is Chorion protein E1 from Antheraea polyphemus (Polyphemus moth).